The chain runs to 294 residues: Octopine-binding periplasmic protein (294 aa).

The N-terminal stretch at 1 to 20 is a signal peptide; it reads MRLKSIMCAALFVVAGQAAA. A disulfide bridge connects residues Cys-57 and Cys-64.

The protein belongs to the bacterial solute-binding protein 3 family.

Its subcellular location is the periplasm. In terms of biological role, component of the octopine active transport system probably consisting of four subunits: Q, M, P and T. The sequence is that of Octopine-binding periplasmic protein (occT) from Rhizobium meliloti (Ensifer meliloti).